A 347-amino-acid polypeptide reads, in one-letter code: Glycerol-1-phosphate dehydrogenase [NAD(P)+] (347 aa).

NAD(+)-binding positions include 94–98 (GKVID) and 116–119 (TAAS). Position 121 (aspartate 121) interacts with substrate. Serine 125 contacts NAD(+). Position 168 (aspartate 168) interacts with substrate. Zn(2+)-binding residues include aspartate 168 and histidine 248. A substrate-binding site is contributed by histidine 252. A Zn(2+)-binding site is contributed by histidine 264.

The protein belongs to the glycerol-1-phosphate dehydrogenase family. As to quaternary structure, homooctamer. The cofactor is Zn(2+).

The protein resides in the cytoplasm. The catalysed reaction is sn-glycerol 1-phosphate + NAD(+) = dihydroxyacetone phosphate + NADH + H(+). It carries out the reaction sn-glycerol 1-phosphate + NADP(+) = dihydroxyacetone phosphate + NADPH + H(+). It participates in membrane lipid metabolism; glycerophospholipid metabolism. Partially inhibited by divalent metal cations such as Co(2+), Cu(2+) and Ni(2+). Its function is as follows. Catalyzes the NAD(P)H-dependent reduction of dihydroxyacetonephosphate (DHAP or glycerone phosphate) to glycerol 1-phosphate (G1P). The G1P thus generated is used as the glycerophosphate backbone of phospholipids in the cellular membranes of Archaea. Is also able to catalyze the reverse reaction, i.e. the NAD(P)(+)-dependent oxidation of G1P but not of G3P. Is not active toward glycerol, dihydroxyacetone, glyceraldehyde-3-phosphate, glyceraldehyde and glycerol-2-phosphate. This is Glycerol-1-phosphate dehydrogenase [NAD(P)+] (egsA) from Methanothermobacter thermautotrophicus (strain ATCC 29096 / DSM 1053 / JCM 10044 / NBRC 100330 / Delta H) (Methanobacterium thermoautotrophicum).